Consider the following 285-residue polypeptide: Probable endonuclease 4 (285 aa).

Positions 69, 109, 145, 179, 182, 216, 229, 231, and 261 each coordinate Zn(2+).

It belongs to the AP endonuclease 2 family. Zn(2+) serves as cofactor.

It catalyses the reaction Endonucleolytic cleavage to 5'-phosphooligonucleotide end-products.. Endonuclease IV plays a role in DNA repair. It cleaves phosphodiester bonds at apurinic or apyrimidinic (AP) sites, generating a 3'-hydroxyl group and a 5'-terminal sugar phosphate. This Shigella sonnei (strain Ss046) protein is Probable endonuclease 4.